The sequence spans 215 residues: HTH-type transcriptional repressor FabR (215 aa).

One can recognise an HTH tetR-type domain in the interval 10–70 (KTRRSLVEAA…TMVDESGLML (61 aa)). The H-T-H motif DNA-binding region spans 33–52 (SLREVAREAGIAPTSFYRHF).

As to quaternary structure, homodimer.

The protein resides in the cytoplasm. Functionally, represses the transcription of fabB, involved in unsaturated fatty acid (UFA) biosynthesis. By controlling UFA production, FabR directly influences the physical properties of the membrane bilayer. This is HTH-type transcriptional repressor FabR from Escherichia coli O139:H28 (strain E24377A / ETEC).